An 833-amino-acid chain; its full sequence is Probable serine/threonine-protein kinase DDB_G0277165 (833 aa).

The Protein kinase domain occupies 9–262 (FIIGKTLGQG…IKEIKEHPWF (254 aa)). ATP-binding positions include 15-23 (LGQGTTGKV) and Lys38. Asp133 (proton acceptor) is an active-site residue. In terms of domain architecture, UBA spans 288–329 (QIDEDIFRSLMALGVGTIDEVKQQLVSNQKSATLIYYRLLEE). Basic and acidic residues predominate over residues 338-351 (NKYGYKPKETRRNS). Disordered regions lie at residues 338 to 472 (NKYG…ISPS), 528 to 626 (QALQ…PIEI), and 764 to 799 (FINPVSPSKQHHHHHHQQQQPQQQQMPPLNLNGGQN). Low complexity-rich tracts occupy residues 365–432 (NNNN…NNNN) and 441–459 (SSSQQPPHIQQPHSQQIPS). The span at 460-472 (NSTSQESMQISPS) shows a compositional bias: polar residues. Low complexity predominate over residues 528 to 589 (QALQQHHQQQ…SSTSTSPQLS (62 aa)). Residues 600–625 (GSMTASTNPATSPTMSHRGKTSSPIE) show a composition bias toward polar residues.

The protein belongs to the protein kinase superfamily. CAMK Ser/Thr protein kinase family.

The catalysed reaction is L-seryl-[protein] + ATP = O-phospho-L-seryl-[protein] + ADP + H(+). The enzyme catalyses L-threonyl-[protein] + ATP = O-phospho-L-threonyl-[protein] + ADP + H(+). The polypeptide is Probable serine/threonine-protein kinase DDB_G0277165 (Dictyostelium discoideum (Social amoeba)).